Reading from the N-terminus, the 309-residue chain is Gamma-hemolysin component A (309 aa).

Residues 1–29 (MIKNKILTATLAVGLIAPLANPFIEISKA) form the signal peptide.

The protein belongs to the aerolysin family. As to quaternary structure, toxicity requires sequential binding and synergistic association of a class S and a class F component which form heterooligomeric complexes. HlgA (class S) associates with HlgB (class F) thus forming an AB toxin in strains producing both gamma-hemolysins and leukocidins. HlgA and LukF-PV can also form a complex.

It localises to the secreted. Its function is as follows. Toxin that seems to act by forming pores in the membrane of the cell. Has a hemolytic and a leucotoxic activity. The chain is Gamma-hemolysin component A (hlgA) from Staphylococcus aureus (strain MRSA252).